A 360-amino-acid chain; its full sequence is Peptide chain release factor 1 (360 aa).

Gln-237 carries the N5-methylglutamine modification.

Belongs to the prokaryotic/mitochondrial release factor family. In terms of processing, methylated by PrmC. Methylation increases the termination efficiency of RF1.

Its subcellular location is the cytoplasm. Functionally, peptide chain release factor 1 directs the termination of translation in response to the peptide chain termination codons UAG and UAA. The chain is Peptide chain release factor 1 from Pseudomonas syringae pv. syringae (strain B728a).